The following is a 205-amino-acid chain: Cerebellin-3 (205 aa).

The signal sequence occupies residues 1-32; it reads MLGTKRHWPPGPSLSLELPLALTLLALRAGWA. A C1q domain is found at 67 to 205; it reads APPGRVAFAA…SFSGFLIFPL (139 aa). Asn-90 carries N-linked (GlcNAc...) asparagine glycosylation.

Heterohexamer; disulfide-linked heterotrimers. Interacts with CBLN1. May also form oligomers with CBLN2 and CBLN4.

It localises to the endoplasmic reticulum. The protein resides in the golgi apparatus. The protein localises to the cis-Golgi network. Its subcellular location is the secreted. It is found in the synapse. May be involved in synaptic functions in the CNS. The sequence is that of Cerebellin-3 (CBLN3) from Bos taurus (Bovine).